Here is a 94-residue protein sequence, read N- to C-terminus: Small ribosomal subunit protein uS19 (94 aa).

It belongs to the universal ribosomal protein uS19 family.

Functionally, protein S19 forms a complex with S13 that binds strongly to the 16S ribosomal RNA. This Desulforudis audaxviator (strain MP104C) protein is Small ribosomal subunit protein uS19.